The primary structure comprises 245 residues: Uridylate kinase (245 aa).

16–19 (KLSG) provides a ligand contact to ATP. The segment at 24–29 (GDNGFG) is involved in allosteric activation by GTP. UMP is bound at residue Gly-59. Residues Gly-60 and Arg-64 each coordinate ATP. Residues Asp-78 and 139 to 146 (NGAPFFTT) contribute to the UMP site. Residues Asn-167, Tyr-173, and Asp-176 each contribute to the ATP site.

It belongs to the UMP kinase family. As to quaternary structure, homohexamer.

It is found in the cytoplasm. The enzyme catalyses UMP + ATP = UDP + ADP. It participates in pyrimidine metabolism; CTP biosynthesis via de novo pathway; UDP from UMP (UMPK route): step 1/1. Allosterically activated by GTP. Inhibited by UTP. Its function is as follows. Catalyzes the reversible phosphorylation of UMP to UDP. The protein is Uridylate kinase of Deinococcus radiodurans (strain ATCC 13939 / DSM 20539 / JCM 16871 / CCUG 27074 / LMG 4051 / NBRC 15346 / NCIMB 9279 / VKM B-1422 / R1).